Reading from the N-terminus, the 182-residue chain is Transcriptional repressor NrdR (182 aa).

Residues 1-24 (MRCPYCGGLDTQVRDSRPTEDNTA) form a disordered region. A zinc finger lies at 3–34 (CPYCGGLDTQVRDSRPTEDNTAIRRRRICPDC). The span at 12–24 (QVRDSRPTEDNTA) shows a compositional bias: basic and acidic residues. Positions 49-139 (LMVLKRSGRR…VYRNFREAKD (91 aa)) constitute an ATP-cone domain. The disordered stretch occupies residues 146 to 182 (ELSQPELAQSDDVKAEGGAEGGRDKPKAAGKPPRSAE). Residues 156–172 (DDVKAEGGAEGGRDKPK) show a composition bias toward basic and acidic residues.

Belongs to the NrdR family. Requires Zn(2+) as cofactor.

Its function is as follows. Negatively regulates transcription of bacterial ribonucleotide reductase nrd genes and operons by binding to NrdR-boxes. This Xanthobacter autotrophicus (strain ATCC BAA-1158 / Py2) protein is Transcriptional repressor NrdR.